A 152-amino-acid chain; its full sequence is Deoxyuridine 5'-triphosphate nucleotidohydrolase (152 aa).

Residues 71–73 (RSG), Asn-84, 88–90 (LID), and Met-98 each bind substrate.

It belongs to the dUTPase family. Requires Mg(2+) as cofactor.

It catalyses the reaction dUTP + H2O = dUMP + diphosphate + H(+). The protein operates within pyrimidine metabolism; dUMP biosynthesis; dUMP from dCTP (dUTP route): step 2/2. In terms of biological role, this enzyme is involved in nucleotide metabolism: it produces dUMP, the immediate precursor of thymidine nucleotides and it decreases the intracellular concentration of dUTP so that uracil cannot be incorporated into DNA. In Enterobacter sp. (strain 638), this protein is Deoxyuridine 5'-triphosphate nucleotidohydrolase.